Consider the following 452-residue polypeptide: Isocitrate dehydrogenase [NADP], mitochondrial (452 aa).

A mitochondrion-targeting transit peptide spans 1–39 (MAGYLRVVRSLCRASGSRPAWAPAALTAPTSQEQPRRHY). N6-acetyllysine is present on residues Lys-45, Lys-48, Lys-67, and Lys-69. 2 positions are modified to N6-acetyllysine; alternate: Lys-80 and Lys-106. An N6-succinyllysine; alternate mark is found at Lys-80 and Lys-106. Residues 115 to 117 (TIT) and Arg-122 contribute to the NADP(+) site. Thr-117 contacts D-threo-isocitrate. D-threo-isocitrate is bound by residues 134–140 (SPNGTIR) and Arg-149. Lys-155 is modified (N6-acetyllysine). The residue at position 166 (Lys-166) is an N6-acetyllysine; alternate. Position 166 is an N6-succinyllysine; alternate (Lys-166). Position 172 (Arg-172) interacts with D-threo-isocitrate. Residues Lys-180 and Lys-193 each carry the N6-acetyllysine; alternate modification. Lys-180 and Lys-193 each carry N6-succinyllysine; alternate. Lys-199 carries the N6-acetyllysine modification. Position 256 is an N6-acetyllysine; alternate (Lys-256). Lys-256 carries the post-translational modification N6-succinyllysine; alternate. An N6-acetyllysine mark is found at Lys-263, Lys-272, Lys-275, and Lys-280. Lys-282 carries the post-translational modification N6-acetyllysine; alternate. Lys-282 is subject to N6-succinyllysine; alternate. Asp-291 is a binding site for Mn(2+). Residue Lys-299 coordinates NADP(+). Asp-314 contacts Mn(2+). Residues 349–354 (GTVTRH) and Asn-367 contribute to the NADP(+) site. Lys-384 carries the N6-acetyllysine; alternate modification. N6-succinyllysine; alternate is present on Lys-384. N6-acetyllysine occurs at positions 400, 413, and 442.

It belongs to the isocitrate and isopropylmalate dehydrogenases family. As to quaternary structure, homodimer. Mg(2+) serves as cofactor. Mn(2+) is required as a cofactor. Post-translationally, acetylation at Lys-413 dramatically reduces catalytic activity. Deacetylated by SIRT3.

It localises to the mitochondrion. The catalysed reaction is D-threo-isocitrate + NADP(+) = 2-oxoglutarate + CO2 + NADPH. Its function is as follows. Plays a role in intermediary metabolism and energy production. It may tightly associate or interact with the pyruvate dehydrogenase complex. The chain is Isocitrate dehydrogenase [NADP], mitochondrial (IDH2) from Homo sapiens (Human).